A 382-amino-acid chain; its full sequence is GDP-mannose transporter 1 (382 aa).

Residues 1 to 40 lie on the Cytoplasmic side of the membrane; it reads MADDKKTNEYTVEMDKLDHGNKNFEAPAPAVRPRGPPAAQ. Residues 41–61 traverse the membrane as a helical segment; sequence LANNPILPVLAYCGSSILMTV. Residues 62–71 lie on the Lumenal side of the membrane; sequence MNKYVLSGTD. A helical transmembrane segment spans residues 72-92; it reads FNLNFFLLCVQSIVCIVAIQT. The Cytoplasmic portion of the chain corresponds to 93–110; that stretch reads CKSSKLITYRDFNSDEAK. Residues 111–127 form a helical membrane-spanning segment; sequence KWFPITLLLIGMIYTGS. Residues 128 to 134 lie on the Lumenal side of the membrane; it reads KALQYLS. A helical membrane pass occupies residues 135 to 151; sequence IPVYTIFKNLTIILIAY. Topologically, residues 152–160 are cytoplasmic; it reads GEVLWFGGS. A helical transmembrane segment spans residues 161 to 182; it reads VTGMTLFSFGLMVLSSIIAAWA. The Lumenal portion of the chain corresponds to 183–200; that stretch reads DIKHAVESSGDATAKVST. The chain crosses the membrane as a helical span at residues 201–221; that stretch reads LNAGYIWMLINCLCTSSYVLG. At 222 to 233 the chain is on the cytoplasmic side; the sequence is MRKRIKLTNFKD. A helical membrane pass occupies residues 234–254; sequence FDTMFYNNLLSIPVLLVLTFL. Over 255 to 274 the chain is Lumenal; the sequence is MEDWSSANIARNFPPADRNG. The chain crosses the membrane as a helical span at residues 275 to 295; the sequence is ILFAMILSGLSSVFISYTSAW. At 296-303 the chain is on the cytoplasmic side; it reads CVRVTSST. Residues 304-324 traverse the membrane as a helical segment; that stretch reads TYSMVGALNKLPIALSGLIFF. The Lumenal portion of the chain corresponds to 325–327; it reads DAP. The helical transmembrane segment at 328-348 threads the bilayer; sequence VTFPSVSAIVVGFISGIVYAV. At 349 to 382 the chain is on the cytoplasmic side; the sequence is AKIKQSAKPKTGVLPMSNPPVSASSQSMRDSLRS. The segment at 358–382 is disordered; sequence KTGVLPMSNPPVSASSQSMRDSLRS. Polar residues predominate over residues 367–382; it reads PPVSASSQSMRDSLRS.

It belongs to the TPT transporter family. SLC35D subfamily. Homooligomer.

The protein resides in the golgi apparatus membrane. It localises to the cytoplasmic vesicle membrane. Its subcellular location is the endoplasmic reticulum membrane. Its function is as follows. Involved in the import of GDP-mannose from the cytoplasm into the Golgi lumen. This chain is GDP-mannose transporter 1 (gmt1), found in Neosartorya fischeri (strain ATCC 1020 / DSM 3700 / CBS 544.65 / FGSC A1164 / JCM 1740 / NRRL 181 / WB 181) (Aspergillus fischerianus).